Reading from the N-terminus, the 2568-residue chain is Highly reducing polyketide synthase resH (2568 aa).

A Ketosynthase family 3 (KS3) domain is found at 9–437 (PEPIAIVGMA…GANAHAILDA (429 aa)). Catalysis depends on for beta-ketoacyl synthase activity residues C184, H319, and H359. Positions 549–877 (FIFTGQGAQW…KLAGSLFLSG (329 aa)) constitute a Malonyl-CoA:ACP transacylase (MAT) domain. Residues 942 to 1081 (HDLLGSRLPG…TNDQLLWPDD (140 aa)) are N-terminal hotdog fold. Positions 942-1244 (HDLLGSRLPG…FSSLETASSD (303 aa)) constitute a PKS/mFAS DH domain. H974 (proton acceptor; for dehydratase activity) is an active-site residue. Residues 1091-1244 (NKDSYDRRWY…FSSLETASSD (154 aa)) form a C-terminal hotdog fold region. The Proton donor; for dehydratase activity role is filled by D1156. The methyltransferase (CMet) domain stretch occupies residues 1295–1595 (VTRLAIRSSA…SGADVVLDDY (301 aa)). In terms of domain architecture, Enoyl reductase (ER) spans 1853-2154 (GRLDSFYFKE…QEDSVGLAVL (302 aa)). The region spanning 2177–2357 (ASYLLIGCLG…QATSIALGMI (181 aa)) is the Ketoreductase (KR) domain. The region spanning 2485-2563 (AVKSAILGLI…GLADQVVSLA (79 aa)) is the Carrier domain. S2522 is subject to O-(pantetheine 4'-phosphoryl)serine.

It depends on pantetheine 4'-phosphate as a cofactor.

The protein operates within antifungal biosynthesis. Its function is as follows. Highly reducing polyketide synthase; part of the gene cluster that mediates the biosynthesis of the tetrahydropyranyl antifungal agent restricticin that acts as an inhibitor of CYP51 and blocks the ergosterol biosynthesis. The highly reducing polyketide synthase resH, the short chain dehydrogenase resG, the cyclase resF, the FAD-dependent monooxygenase resA and the enoylreductase resD are required to generate the first stable intermediate desmethylrestrictinol. ResH with resD biosynthesize the first polyketide chain intermediate that is reduced by resG, followed by epoxidation by resA before 6-endo cyclization via epoxide opening by resF leads to desmethylrestrictinol. The methyltransferase resE then catalyzes the C4 O-methylation of desmethylrestrictinol to produce restrictinol, and the nonribosomal peptide synthetase resC catalyzes the C3 esterification of restrictinol with glycine that leads to restricticin. This is Highly reducing polyketide synthase resH from Aspergillus sclerotiorum.